Here is a 510-residue protein sequence, read N- to C-terminus: Inositol-3-phosphate synthase 1 (510 aa).

Residues Gly-70, Gly-71, Asn-72, Asn-73, Asp-143, Ile-180, Gln-190, Arg-193, Thr-230, Ala-231, Asn-232, Thr-233, Gly-281, Ser-282, Asp-306, Ser-309, Asn-340, Asn-341, Asp-342, Lys-355, Gly-393, Asp-394, Asp-422, and Ser-423 each coordinate NAD(+).

Belongs to the myo-inositol 1-phosphate synthase family. NAD(+) is required as a cofactor.

Its subcellular location is the cytoplasm. It is found in the cytosol. The protein resides in the nucleus. It carries out the reaction D-glucose 6-phosphate = 1D-myo-inositol 3-phosphate. It functions in the pathway polyol metabolism; myo-inositol biosynthesis; myo-inositol from D-glucose 6-phosphate: step 1/2. Its function is as follows. Key enzyme in myo-inositol biosynthesis pathway that catalyzes the conversion of glucose 6-phosphate to 1-myo-inositol 1-phosphate in a NAD-dependent manner. May play a role in oxidative stress resistance and influences ascorbate levels. In Populus euphratica (Euphrates poplar), this protein is Inositol-3-phosphate synthase 1.